The following is a 908-amino-acid chain: Alanine--tRNA ligase (908 aa).

Residues histidine 588, histidine 592, cysteine 691, and histidine 695 each coordinate Zn(2+).

It belongs to the class-II aminoacyl-tRNA synthetase family. Zn(2+) serves as cofactor.

Its subcellular location is the cytoplasm. It carries out the reaction tRNA(Ala) + L-alanine + ATP = L-alanyl-tRNA(Ala) + AMP + diphosphate. Its function is as follows. Catalyzes the attachment of alanine to tRNA(Ala) in a two-step reaction: alanine is first activated by ATP to form Ala-AMP and then transferred to the acceptor end of tRNA(Ala). Also edits incorrectly charged Ser-tRNA(Ala) and Gly-tRNA(Ala) via its editing domain. The protein is Alanine--tRNA ligase of Mycobacterium leprae (strain TN).